The following is a 122-amino-acid chain: Large ribosomal subunit protein uL14 (122 aa).

The protein belongs to the universal ribosomal protein uL14 family. Part of the 50S ribosomal subunit. Forms a cluster with proteins L3 and L19. In the 70S ribosome, L14 and L19 interact and together make contacts with the 16S rRNA in bridges B5 and B8.

Its function is as follows. Binds to 23S rRNA. Forms part of two intersubunit bridges in the 70S ribosome. This chain is Large ribosomal subunit protein uL14, found in Polynucleobacter asymbioticus (strain DSM 18221 / CIP 109841 / QLW-P1DMWA-1) (Polynucleobacter necessarius subsp. asymbioticus).